We begin with the raw amino-acid sequence, 142 residues long: Hemoglobin F-I (142 aa).

Residues 2–142 enclose the Globin domain; the sequence is GLTTAQIKAI…AAGVLVAAMK (141 aa). Histidine 95 is a binding site for heme b.

This sequence belongs to the globin family. As to quaternary structure, homotetramer.

In terms of biological role, hemoglobin F-I appears to function in storage, rather than transport of oxygen. The sequence is that of Hemoglobin F-I from Urechis caupo (Innkeeper worm).